The sequence spans 241 residues: ATP synthase subunit a (241 aa).

Helical transmembrane passes span 30–50 (GQVF…VVVG), 91–111 (FIGT…LVPW), 128–148 (INTT…AGLS), 193–213 (LVVA…VMFL), and 214–234 (GLFT…YYIG).

The protein belongs to the ATPase A chain family. In terms of assembly, F-type ATPases have 2 components, CF(1) - the catalytic core - and CF(0) - the membrane proton channel. CF(1) has five subunits: alpha(3), beta(3), gamma(1), delta(1), epsilon(1). CF(0) has four main subunits: a, b, b' and c.

Its subcellular location is the cellular thylakoid membrane. Its function is as follows. Key component of the proton channel; it plays a direct role in the translocation of protons across the membrane. The chain is ATP synthase subunit a from Prochlorococcus marinus (strain MIT 9313).